The primary structure comprises 645 residues: 1-deoxy-D-xylulose-5-phosphate synthase 2 (645 aa).

Thiamine diphosphate is bound by residues His79 and 120 to 122; that span reads GHS. Asp151 serves as a coordination point for Mg(2+). Thiamine diphosphate is bound by residues 152 to 153, Asn180, Tyr291, and Glu373; that span reads GS. Asn180 is a Mg(2+) binding site.

This sequence belongs to the transketolase family. DXPS subfamily. Homodimer. The cofactor is Mg(2+). Thiamine diphosphate serves as cofactor.

It catalyses the reaction D-glyceraldehyde 3-phosphate + pyruvate + H(+) = 1-deoxy-D-xylulose 5-phosphate + CO2. It participates in metabolic intermediate biosynthesis; 1-deoxy-D-xylulose 5-phosphate biosynthesis; 1-deoxy-D-xylulose 5-phosphate from D-glyceraldehyde 3-phosphate and pyruvate: step 1/1. Catalyzes the acyloin condensation reaction between C atoms 2 and 3 of pyruvate and glyceraldehyde 3-phosphate to yield 1-deoxy-D-xylulose-5-phosphate (DXP). This chain is 1-deoxy-D-xylulose-5-phosphate synthase 2, found in Rhodospirillum rubrum (strain ATCC 11170 / ATH 1.1.1 / DSM 467 / LMG 4362 / NCIMB 8255 / S1).